A 393-amino-acid polypeptide reads, in one-letter code: Pyrimidine monooxygenase RutA (393 aa).

Residues 79 to 80 (IK), Asn-145, Glu-154, 170 to 171 (RY), and Ser-220 each bind FMN.

It belongs to the NtaA/SnaA/DszA monooxygenase family. RutA subfamily.

The catalysed reaction is uracil + FMNH2 + NADH + O2 = (Z)-3-ureidoacrylate + FMN + NAD(+) + H2O + H(+). It carries out the reaction thymine + FMNH2 + NADH + O2 = (Z)-2-methylureidoacrylate + FMN + NAD(+) + H2O + H(+). Its function is as follows. Catalyzes the pyrimidine ring opening between N-3 and C-4 by an unusual flavin hydroperoxide-catalyzed mechanism, adding oxygen atoms in the process to yield ureidoacrylate peracid, that immediately reacts with FMN forming ureidoacrylate and FMN-N(5)-oxide. The FMN-N(5)-oxide reacts spontaneously with NADH to produce FMN. Requires the flavin reductase RutF to regenerate FMN in vivo. In Escherichia coli O139:H28 (strain E24377A / ETEC), this protein is Pyrimidine monooxygenase RutA.